The chain runs to 467 residues: Membrane-bound acylglycerophosphatidylinositol O-acyltransferase mboat7 (467 aa).

The Cytoplasmic segment spans residues 1–5; sequence MSPDE. Residues 6-22 form a helical membrane-spanning segment; sequence LVYLGILAATIPVGFLF. Residues 23 to 33 lie on the Lumenal side of the membrane; the sequence is RYLSPPVKQGA. Residues 34–57 form a helical membrane-spanning segment; it reads ALLLGLIISIATCGIHTLHSLCTV. The Cytoplasmic portion of the chain corresponds to 58 to 73; that stretch reads LGTWIIIKINWRSAPA. A helical membrane pass occupies residues 74–93; it reads LSLAWTFLYLLFFRLVTWFG. The Lumenal portion of the chain corresponds to 94–193; it reads LPQPTPFANA…LPGKEPCLQR (100 aa). A helical transmembrane segment spans residues 194–211; it reads LKMVPVYGLLFIAVNSVF. Over 212–230 the chain is Cytoplasmic; sequence PLSYVRTEDFLEHNYFYRF. The chain crosses the membrane as a helical span at residues 231–260; it reads FYMVAIFFVFRMRFYSAWCGAEAGCISAGL. The Lumenal segment spans residues 261-421; it reads GCYPQGALSK…LKASDTISYW (161 aa). An N-linked (GlcNAc...) asparagine glycan is attached at Asn316. The chain crosses the membrane as a helical span at residues 422-442; it reads SSIYFVIHIIAIVCIAVGQFM. Topologically, residues 443-467 are cytoplasmic; sequence KGGRKREKRERGEGEKEDAVREKAE. The disordered stretch occupies residues 447–467; that stretch reads KREKRERGEGEKEDAVREKAE. A compositionally biased stretch (basic and acidic residues) spans 451–467; that stretch reads RERGEGEKEDAVREKAE.

It belongs to the membrane-bound acyltransferase family.

It localises to the endoplasmic reticulum membrane. The catalysed reaction is a 1-acyl-sn-glycero-3-phospho-(1D-myo-inositol) + (5Z,8Z,11Z,14Z)-eicosatetraenoyl-CoA = a 1-acyl-2-(5Z,8Z,11Z,14Z-eicosatetraenoyl)-sn-glycero-3-phospho-(1D-myo-inositol) + CoA. It catalyses the reaction (5Z,8Z,11Z,14Z)-eicosatetraenoyl-CoA + 1-hexadecanoyl-sn-glycero-3-phosphocholine = 1-hexadecanoyl-2-(5Z,8Z,11Z,14Z-eicosatetraenoyl)-sn-glycero-3-phosphocholine + CoA. The enzyme catalyses a 1-acyl-sn-glycero-3-phospho-(1D-myo-inositol) + an acyl-CoA = a 1,2-diacyl-sn-glycero-3-phospho-(1D-myo-inositol) + CoA. It carries out the reaction 1-octadecanoyl-sn-glycero-3-phospho-(1D-myo-inositol) + (5Z,8Z,11Z,14Z)-eicosatetraenoyl-CoA = 1-octadecanoyl-2-(5Z,8Z,11Z,14Z-eicosatetraenoyl)-sn-glycero-3-phospho-(1D-myo-inositol) + CoA. It functions in the pathway lipid metabolism; phospholipid metabolism. Acyltransferase which catalyzes the transfer of an acyl group from an acyl-CoA to a lysophosphatidylinositol (1-acylglycerophosphatidylinositol or LPI) leading to the production of a phosphatidylinositol (1,2-diacyl-sn-glycero-3-phosphoinositol or PI) and participates in the reacylation step of the phospholipid remodeling pathway also known as the Lands cycle. Prefers arachidonoyl-CoA as the acyl donor, thus contributing to the regulation of free levels arachidonic acid in cell. The sequence is that of Membrane-bound acylglycerophosphatidylinositol O-acyltransferase mboat7 (mboat7) from Danio rerio (Zebrafish).